A 443-amino-acid polypeptide reads, in one-letter code: ATP-dependent protease ATPase subunit HslU (443 aa).

Residues isoleucine 18, 60–65, aspartate 256, glutamate 321, and arginine 393 each bind ATP; that span reads GVGKTE.

It belongs to the ClpX chaperone family. HslU subfamily. In terms of assembly, a double ring-shaped homohexamer of HslV is capped on each side by a ring-shaped HslU homohexamer. The assembly of the HslU/HslV complex is dependent on binding of ATP.

The protein resides in the cytoplasm. Functionally, ATPase subunit of a proteasome-like degradation complex; this subunit has chaperone activity. The binding of ATP and its subsequent hydrolysis by HslU are essential for unfolding of protein substrates subsequently hydrolyzed by HslV. HslU recognizes the N-terminal part of its protein substrates and unfolds these before they are guided to HslV for hydrolysis. In Escherichia coli O17:K52:H18 (strain UMN026 / ExPEC), this protein is ATP-dependent protease ATPase subunit HslU.